The sequence spans 311 residues: Non-homologous end joining protein Ku (311 aa).

Residues 26–210 (ISFGLVNIPI…NVNDKELQTA (185 aa)) form the Ku domain. Residues 269 to 311 (ASIDRTRRPNRETPAAAPAQAAEPKGAGDKKQKTTRKKASGTS) are disordered. Residues 282–293 (PAAAPAQAAEPK) are compositionally biased toward low complexity. Residues 301-311 (KTTRKKASGTS) are compositionally biased toward basic residues.

Belongs to the prokaryotic Ku family. In terms of assembly, homodimer. Interacts with LigD.

It localises to the spore core. Functionally, with LigD forms a non-homologous end joining (NHEJ) DNA repair enzyme, which repairs dsDNA breaks with reduced fidelity. Binds linear dsDNA with 5'- and 3'- overhangs but not closed circular dsDNA nor ssDNA. Recruits and stimulates the ligase activity of LigD. Probably involved in DNA repair during spore germination. In Bacillus subtilis (strain 168), this protein is Non-homologous end joining protein Ku.